Consider the following 286-residue polypeptide: ATP synthase gamma chain (286 aa).

It belongs to the ATPase gamma chain family. In terms of assembly, F-type ATPases have 2 components, CF(1) - the catalytic core - and CF(0) - the membrane proton channel. CF(1) has five subunits: alpha(3), beta(3), gamma(1), delta(1), epsilon(1). CF(0) has three main subunits: a, b and c.

It is found in the cell inner membrane. In terms of biological role, produces ATP from ADP in the presence of a proton gradient across the membrane. The gamma chain is believed to be important in regulating ATPase activity and the flow of protons through the CF(0) complex. The sequence is that of ATP synthase gamma chain from Shewanella frigidimarina (strain NCIMB 400).